Consider the following 187-residue polypeptide: Large ribosomal subunit protein uL5 (187 aa).

Belongs to the universal ribosomal protein uL5 family. As to quaternary structure, part of the 50S ribosomal subunit; part of the 5S rRNA/L5/L18/L25 subcomplex. Contacts the 5S rRNA and the P site tRNA. Forms a bridge to the 30S subunit in the 70S ribosome.

Functionally, this is one of the proteins that bind and probably mediate the attachment of the 5S RNA into the large ribosomal subunit, where it forms part of the central protuberance. In the 70S ribosome it contacts protein S13 of the 30S subunit (bridge B1b), connecting the 2 subunits; this bridge is implicated in subunit movement. Contacts the P site tRNA; the 5S rRNA and some of its associated proteins might help stabilize positioning of ribosome-bound tRNAs. The chain is Large ribosomal subunit protein uL5 from Malacoplasma penetrans (strain HF-2) (Mycoplasma penetrans).